The sequence spans 948 residues: UvrABC system protein A (948 aa).

Residue glycine 33 to serine 40 coordinates ATP. The C4-type zinc-finger motif lies at cysteine 252–cysteine 279. 2 consecutive ABC transporter domains span residues tryptophan 309–leucine 587 and alanine 607–lysine 935. Glycine 639–serine 646 is an ATP binding site. Residues cysteine 738–cysteine 764 form a C4-type zinc finger.

Belongs to the ABC transporter superfamily. UvrA family. As to quaternary structure, forms a heterotetramer with UvrB during the search for lesions.

The protein resides in the cytoplasm. The UvrABC repair system catalyzes the recognition and processing of DNA lesions. UvrA is an ATPase and a DNA-binding protein. A damage recognition complex composed of 2 UvrA and 2 UvrB subunits scans DNA for abnormalities. When the presence of a lesion has been verified by UvrB, the UvrA molecules dissociate. The sequence is that of UvrABC system protein A from Staphylococcus aureus (strain MRSA252).